The following is a 93-amino-acid chain: MATFKKFNKDKRPKRNTQSLLFKRKRFCRFTVAGVEEIDYKDVDTLRDFIGENGKIVPARLTGTRAIYQRQLNTAIKRARFLALVPYSDQHKI.

It belongs to the bacterial ribosomal protein bS18 family. As to quaternary structure, part of the 30S ribosomal subunit. Forms a tight heterodimer with protein bS6.

Its function is as follows. Binds as a heterodimer with protein bS6 to the central domain of the 16S rRNA, where it helps stabilize the platform of the 30S subunit. The polypeptide is Small ribosomal subunit protein bS18 (Delftia acidovorans (strain DSM 14801 / SPH-1)).